A 176-amino-acid chain; its full sequence is Probable DNA-directed RNA polymerase subunit delta (176 aa).

Residues 14 to 81 enclose the HTH HARE-type domain; it reads LSLIDVAHFI…GNNMWGLRAW (68 aa). Disordered stretches follow at residues 91-119 and 140-176; these read VQTQ…VDYD and DEDE…PEDK. Composition is skewed to acidic residues over residues 105–119 and 159–176; these read DDDD…VDYD and TVED…PEDK.

The protein belongs to the RpoE family. In terms of assembly, RNAP is composed of a core of 2 alpha, a beta and a beta' subunits. The core is associated with a delta subunit and one of several sigma factors.

Participates in both the initiation and recycling phases of transcription. In the presence of the delta subunit, RNAP displays an increased specificity of transcription, a decreased affinity for nucleic acids, and an increased efficiency of RNA synthesis because of enhanced recycling. The protein is Probable DNA-directed RNA polymerase subunit delta of Listeria welshimeri serovar 6b (strain ATCC 35897 / DSM 20650 / CCUG 15529 / CIP 8149 / NCTC 11857 / SLCC 5334 / V8).